Here is a 184-residue protein sequence, read N- to C-terminus: GTP cyclohydrolase 1 (184 aa).

Positions 75, 78, and 146 each coordinate Zn(2+).

The protein belongs to the GTP cyclohydrolase I family. Homomer.

The enzyme catalyses GTP + H2O = 7,8-dihydroneopterin 3'-triphosphate + formate + H(+). The protein operates within cofactor biosynthesis; 7,8-dihydroneopterin triphosphate biosynthesis; 7,8-dihydroneopterin triphosphate from GTP: step 1/1. This chain is GTP cyclohydrolase 1, found in Streptococcus pneumoniae (strain Taiwan19F-14).